The chain runs to 576 residues: Proline--tRNA ligase (576 aa).

The protein belongs to the class-II aminoacyl-tRNA synthetase family. ProS type 1 subfamily. As to quaternary structure, homodimer.

It is found in the cytoplasm. It catalyses the reaction tRNA(Pro) + L-proline + ATP = L-prolyl-tRNA(Pro) + AMP + diphosphate. Functionally, catalyzes the attachment of proline to tRNA(Pro) in a two-step reaction: proline is first activated by ATP to form Pro-AMP and then transferred to the acceptor end of tRNA(Pro). As ProRS can inadvertently accommodate and process non-cognate amino acids such as alanine and cysteine, to avoid such errors it has two additional distinct editing activities against alanine. One activity is designated as 'pretransfer' editing and involves the tRNA(Pro)-independent hydrolysis of activated Ala-AMP. The other activity is designated 'posttransfer' editing and involves deacylation of mischarged Ala-tRNA(Pro). The misacylated Cys-tRNA(Pro) is not edited by ProRS. The protein is Proline--tRNA ligase of Magnetococcus marinus (strain ATCC BAA-1437 / JCM 17883 / MC-1).